A 138-amino-acid polypeptide reads, in one-letter code: Superoxide dismutase [Mn] (138 aa).

Mn(2+) is bound by residues His1, His49, Asp133, and His137.

The protein belongs to the iron/manganese superoxide dismutase family. The cofactor is Mn(2+).

The catalysed reaction is 2 superoxide + 2 H(+) = H2O2 + O2. Its function is as follows. Destroys superoxide anion radicals which are normally produced within the cells and which are toxic to biological systems. The protein is Superoxide dismutase [Mn] (sodA) of Mycobacterium malmoense.